A 270-amino-acid chain; its full sequence is tRNA pseudouridine synthase A (270 aa).

Aspartate 60 (nucleophile) is an active-site residue. Residues 107 to 111 are RNA binding; the sequence is FHARF. Residue tyrosine 118 coordinates substrate. Residues 168-172 are interaction with tRNA; it reads QCQSR.

This sequence belongs to the tRNA pseudouridine synthase TruA family. As to quaternary structure, homodimer.

The enzyme catalyses uridine(38/39/40) in tRNA = pseudouridine(38/39/40) in tRNA. Its function is as follows. Formation of pseudouridine at positions 38, 39 and 40 in the anticodon stem and loop of transfer RNAs. In Klebsiella pneumoniae (strain 342), this protein is tRNA pseudouridine synthase A.